A 267-amino-acid chain; its full sequence is Serine/arginine-rich splicing factor 7 (267 aa).

The region spanning 40 to 113 is the RRM domain; the sequence is TKVYVGNLGT…SRVRVELSTG (74 aa). Lys53 is modified (N6-acetyllysine; alternate). A Glycyl lysine isopeptide (Lys-Gly) (interchain with G-Cter in SUMO2); alternate cross-link involves residue Lys53. Position 61 is a phosphoserine (Ser61). The tract at residues 110–127 is sufficient for interaction with NXF1; that stretch reads LSTGMPRRSRFDRPPARR. The segment at 133–150 adopts a CCHC-type zinc-finger fold; sequence DRCYECGEKGHYAYDCHR. The segment covering 152–209 has biased composition (basic residues); it reads SRRRRSRSRSRSHSRSRGRRYSRSRSRSRGRRSRSASPRRSRSVSLRRSRSASLRRSR. The segment at 152–267 is disordered; that stretch reads SRRRRSRSRS…HRSASPERMD (116 aa). Tandem repeats lie at residues 182-189, 190-197, 198-205, and 206-213. Positions 182 to 255 are 6 X 8 AA repeats of R-R-S-R-S-X-S-X; sequence RRSRSASPRR…SPKRSRSPSG (74 aa). A phosphoserine mark is found at Ser192, Ser194, and Ser196. Ser210, Ser212, Ser221, Ser223, and Ser225 each carry phosphoserine. Basic residues predominate over residues 223–251; sequence SRSRSRSRSISRPRSSRSKSRSPSPKRSR. A 5; approximate repeat occupies 240–247; it reads SKSRSPSP. The stretch at 248–255 is one 6; approximate repeat; sequence KRSRSPSG. Residues Ser260 and Ser262 each carry the phosphoserine modification.

It belongs to the splicing factor SR family. As to quaternary structure, found in large molecular weight complexes containing CCNL1 and the p110 isoforms of either CDC2L1 or CDC2L2. Interacts with CCNL2 and CPSF6. Interacts with NXF1. Interacts with YTHDC1. In terms of processing, extensively phosphorylated on serine residues in the RS domain.

The protein localises to the nucleus. It is found in the cytoplasm. Required for pre-mRNA splicing. Represses the splicing of MAPT/Tau exon 10. May function as export adapter involved in mRNA nuclear export such as of histone H2A. Binds mRNA which is thought to be transferred to the NXF1-NXT1 heterodimer for export (TAP/NXF1 pathway); enhances NXF1-NXT1 RNA-binding activity. RNA-binding is semi-sequence specific. The polypeptide is Serine/arginine-rich splicing factor 7 (Srsf7) (Mus musculus (Mouse)).